The chain runs to 61 residues: Metallothionein-2 (61 aa).

M1 carries the post-translational modification N-acetylmethionine. Residues 1-29 (MDPNCSCATDGSCSCAGSCKCKECKCTTC) are beta. Residues C5, C7, C13, C15, C19, C21, C24, C26, C29, C33, C34, C36, C37, C41, C44, C48, C50, and C57 each contribute to the a divalent metal cation site. Positions 30–61 (KKSCCSCCPVGCAKCSQGCVCKEASDKCSCCA) are alpha. S58 carries the phosphoserine modification. 2 residues coordinate a divalent metal cation: C59 and C60.

Belongs to the metallothionein superfamily. Type 1 family.

Its function is as follows. Metallothioneins have a high content of cysteine residues that bind various heavy metals; these proteins are transcriptionally regulated by both heavy metals and glucocorticoids. The polypeptide is Metallothionein-2 (MT2) (Cricetulus griseus (Chinese hamster)).